Consider the following 334-residue polypeptide: Hematopoietic SH2 domain-containing protein (334 aa).

In terms of domain architecture, SH2 spans 34–125; sequence WFHGTISREA…PFGELLTQAC (92 aa). Disordered stretches follow at residues 157–181 and 254–280; these read EVQR…KGEF and EDSC…ATFR. A compositionally biased stretch (polar residues) spans 258-267; sequence AATTSLQNPA.

In terms of assembly, interacts with FES and TNK2. In terms of processing, may be phosphorylated by FES and ACK1. As to expression, predominantly expressed in spleen and thymus. Appears not to be expressed in heart, brain, liver, kidney, embryo, lung and ovary.

The protein localises to the cytoplasm. It is found in the mitochondrion. Adapter protein involved in tyrosine kinase and CD28 signaling. May be a modulator of the apoptotic response through its ability to affect mitochondrial stability. The polypeptide is Hematopoietic SH2 domain-containing protein (Hsh2d) (Mus musculus (Mouse)).